A 193-amino-acid chain; its full sequence is uncharacterized protein (193 aa).

This is an uncharacterized protein from Mycoplasma genitalium (strain ATCC 33530 / DSM 19775 / NCTC 10195 / G37) (Mycoplasmoides genitalium).